The chain runs to 179 residues: O-acetyl-ADP-ribose deacetylase (179 aa).

A Macro domain is found at 1-175 (MTSRLQVIQG…LYARLLTQQG (175 aa)). Residues 11-12 (DI), N25, 33-35 (GVD), and 122-126 (STGVY) contribute to the substrate site. Catalysis depends on D35, which acts as the Proton acceptor.

It belongs to the MacroD-type family. YmdB subfamily. As to quaternary structure, homodimer. Interacts with RNase III.

The catalysed reaction is 3''-O-acetyl-ADP-D-ribose + H2O = ADP-D-ribose + acetate + H(+). It carries out the reaction 2''-O-acetyl-ADP-D-ribose + H2O = ADP-D-ribose + acetate + H(+). Deacetylates O-acetyl-ADP ribose to yield ADP-ribose and free acetate. Down-regulates ribonuclease 3 (RNase III) activity. Acts by interacting directly with the region of the ribonuclease that is required for dimerization/activation. This Salmonella gallinarum (strain 287/91 / NCTC 13346) protein is O-acetyl-ADP-ribose deacetylase.